Here is a 1558-residue protein sequence, read N- to C-terminus: ABC transporter NFT1 (1558 aa).

The Extracellular segment spans residues 1-29; it reads MIKNGTCPYWERDDLSECARREYIEFKFP. N-linked (GlcNAc...) asparagine glycosylation is present at Asn-4. The chain crosses the membrane as a helical span at residues 30–50; sequence LFILLTGMIYAFCKVFRAFYL. The Cytoplasmic portion of the chain corresponds to 51-103; it reads RGKNHTNEAPEFEEQGNGNHEYARFSVLRLKSAWESRSFCNVNNRSTFDKFKK. The chain crosses the membrane as a helical span at residues 104 to 124; it reads FIEGAFIVLQLTIHLYILSSM. At 125-130 the chain is on the extracellular side; the sequence is PMDNKK. The chain crosses the membrane as a helical span at residues 131–151; sequence FFHQGFLVQMFLWILLLVVIT. Residues 152-169 are Cytoplasmic-facing; it reads LRLISASQSFRWVLACKR. A helical membrane pass occupies residues 170–190; sequence DLWAVSFYSYASLFTLSILPL. Topologically, residues 191-201 are extracellular; that stretch reads RSVFIGKIKDK. A helical membrane pass occupies residues 202–222; the sequence is IMVKYIISETFIDLALLLLLS. The Cytoplasmic segment spans residues 223–302; sequence TSSIEGTRYS…SSKKGRLLPN (80 aa). Residues 303-323 form a helical membrane-spanning segment; the sequence is IICYFKAVFISQLFLAFVSSF. The ABC transmembrane type-1 1 domain occupies 311 to 621; that stretch reads FISQLFLAFV…IASTVSLLIQ (311 aa). Residues 324–351 are Extracellular-facing; the sequence is LNFVPSLLMPRILSYVNDPKSKSWNLVS. The chain crosses the membrane as a helical span at residues 352–374; it reads LYVSSMLVSKIIATTCRGQGLFL. Over 375 to 449 the chain is Cytoplasmic; that stretch reads GEKGTMQLRT…VMSIDAFKVS (75 aa). The segment at 410–434 is disordered; the sequence is NASTSFEENPDSSEAEPRKKSSRKD. The segment covering 424 to 434 has biased composition (basic and acidic residues); that stretch reads AEPRKKSSRKD. The chain crosses the membrane as a helical span at residues 450-470; that stretch reads EAMNTFYLACEAVFMTVTALM. Topologically, residues 471–481 are extracellular; the sequence is ILYSLLGWSAF. Residues 482–504 form a helical membrane-spanning segment; the sequence is AGTFALLAMIPLNFWCATFYGNY. Over 505–558 the chain is Cytoplasmic; sequence QADQLILTDKRTSGISEALNSIRVIKLLAWENLFYQKIINVRDGEIRLLKKKAT. The chain crosses the membrane as a helical span at residues 559–579; sequence IFFLNHLIWFFGPTLVSAITF. Topologically, residues 580-584 are extracellular; sequence SVFIK. Residues 585–605 form a helical membrane-spanning segment; the sequence is FQNQTLTPTIAFTALSLFAIL. At 606 to 953 the chain is on the cytoplasmic side; sequence RTPMDQIAST…KFSAYKWLAD (348 aa). Residues 651–892 enclose the ABC transporter 1 domain; sequence FGFEDASMEW…NEFLRESINN (242 aa). 686–693 contributes to the ATP binding site; the sequence is GPTGSGKS. A compositionally biased stretch (polar residues) spans 892–901; that stretch reads NDSKNTTHNQ. The segment at 892-926 is disordered; that stretch reads NDSKNTTHNQIDLKRSTTSKKTKNGDPEGGNSQDE. A helical membrane pass occupies residues 954-974; sequence YFGGLGVVFVFTSSSILIHGI. In terms of domain architecture, ABC transmembrane type-1 2 spans 961-1251; it reads VFVFTSSSIL…IIKVFSSVEL (291 aa). At 975 to 1013 the chain is on the extracellular side; the sequence is TLSQGFWLRYWLDTGSSGSKSTWLYRIVEGHSNIYFLLT. Residues 1014 to 1034 traverse the membrane as a helical segment; sequence YIIIGLVSSFLTSGKVWIAII. The Cytoplasmic portion of the chain corresponds to 1035-1082; sequence SGTNVTKKIFAKLLSSILYAKLRFHNVTPTGRIMNRFSKDMDIIDQQL. The chain crosses the membrane as a helical span at residues 1083-1105; it reads IPNFEGLSYSVVVCLWIILLIGY. Residues 1106–1109 are Extracellular-facing; the sequence is VTPQ. A helical transmembrane segment spans residues 1110–1132; it reads FLLFAIPLCALYYTVCTLYLRAS. Over 1133-1199 the chain is Cytoplasmic; it reads RELKRIDNIN…ATEWITYRVD (67 aa). A helical membrane pass occupies residues 1200–1220; sequence IIGTLVLFSSSVMIIMKASYL. Over 1221-1222 the chain is Extracellular; that stretch reads DA. A helical membrane pass occupies residues 1223–1243; the sequence is GLAGILLSNAFSFTETAQWII. At 1244 to 1558 the chain is on the cytoplasmic side; that stretch reads KVFSSVELLM…LAKVSFDNKR (315 aa). Positions 1285–1538 constitute an ABC transporter 2 domain; it reads VELKNLSLRY…RNTIFYRLCR (254 aa). 1319–1326 is an ATP binding site; that stretch reads GRTGAGKS.

Belongs to the ABC transporter superfamily. ABCC family. Conjugate transporter (TC 3.A.1.208) subfamily.

Its subcellular location is the membrane. The protein is ABC transporter NFT1 (NFT1) of Saccharomyces cerevisiae (Baker's yeast).